A 312-amino-acid chain; its full sequence is Signal peptidase I (312 aa).

The helical transmembrane segment at 7–27 (IFLLTSTFFTGILWIIDHILL) threads the bilayer. Topologically, residues 28–63 (IKNYFYNKKKTKNNNTILINKVILENKKCFFRSLSS) are cytoplasmic. The chain crosses the membrane as a helical span at residues 64–84 (LFPTFFIVFIIRSFIYEPFQI). At 85-312 (PSGSMMPTLL…IRIKRIGNIY (228 aa)) the chain is on the extracellular side. Active-site residues include Ser-88 and Lys-142.

This sequence belongs to the peptidase S26 family.

Its subcellular location is the cell membrane. The catalysed reaction is Cleavage of hydrophobic, N-terminal signal or leader sequences from secreted and periplasmic proteins.. In Buchnera aphidicola subsp. Schizaphis graminum (strain Sg), this protein is Signal peptidase I (lepB).